The chain runs to 1610 residues: Adenylate cyclase type 10 (1610 aa).

Guanylate cyclase domains are found at residues 42-179 and 293-418; these read VLMF…RLAQ and TIVF…ARMM. Residues Asp47 and Ile48 each contribute to the Mg(2+) site. 47 to 52 provides a ligand contact to ATP; it reads DISGFT. Lys95 contacts hydrogencarbonate. Asp99 contacts Mg(2+). ATP-binding residues include Asp99 and Lys144. Positions 167, 176, and 337 each coordinate hydrogencarbonate. ATP contacts are provided by residues Val406 and 412 to 416; that span reads NLAAR.

It belongs to the adenylyl cyclase class-4/guanylyl cyclase family. Requires Mg(2+) as cofactor. Mn(2+) is required as a cofactor. Post-translationally, cleavage may occur to generate the active 48 kDa form. In terms of tissue distribution, detected in airway epithelial cells and testis (at protein level). Weakly expressed in multiple tissues. Expressed in brain, heart, kidney, liver, lung, pancreas, peripheral blood leukocytes, placenta, skeletal muscle, stomach, thymus, airway epithelial cells, duodenum, jejunum and ileum. Very low level of expression in bone.

It localises to the cell membrane. The protein resides in the cytoplasm. It is found in the cytoskeleton. Its subcellular location is the perinuclear region. The protein localises to the nucleus. It localises to the cell projection. The protein resides in the cilium. It is found in the mitochondrion. It catalyses the reaction ATP = 3',5'-cyclic AMP + diphosphate. Its activity is regulated as follows. Activated by manganese or magnesium ions. In the presence of magnesium ions, the enzyme is activated by bicarbonate. In the presence of manganese ions, the enzyme is inhibited by bicarbonate. In the absence of magnesium and bicarbonate, the enzyme is weakly activated by calcium. Calcium mildly increases the enzyme activity, also in the presence of magnesium ions. Its function is as follows. Catalyzes the formation of the signaling molecule cAMP. May function as sensor that mediates responses to changes in cellular bicarbonate and CO(2) levels. Has a critical role in mammalian spermatogenesis by producing the cAMP which regulates cAMP-responsive nuclear factors indispensable for sperm maturation in the epididymis. Induces capacitation, the maturational process that sperm undergo prior to fertilization. Involved in ciliary beat regulation. This is Adenylate cyclase type 10 (ADCY10) from Homo sapiens (Human).